The chain runs to 157 residues: Lipoprotein signal peptidase (157 aa).

The next 3 helical transmembrane spans lie at 10–30 (LVFM…KYAI), 58–78 (FLEG…FIFL), and 84–104 (LFKN…SNVL). Residues D114 and D131 contribute to the active site. A helical transmembrane segment spans residues 122–142 (FDFAIFNFADVMIDVGVGVLL).

It belongs to the peptidase A8 family.

It localises to the cell inner membrane. It carries out the reaction Release of signal peptides from bacterial membrane prolipoproteins. Hydrolyzes -Xaa-Yaa-Zaa-|-(S,diacylglyceryl)Cys-, in which Xaa is hydrophobic (preferably Leu), and Yaa (Ala or Ser) and Zaa (Gly or Ala) have small, neutral side chains.. Its pathway is protein modification; lipoprotein biosynthesis (signal peptide cleavage). Functionally, this protein specifically catalyzes the removal of signal peptides from prolipoproteins. The protein is Lipoprotein signal peptidase of Helicobacter pylori (strain ATCC 700392 / 26695) (Campylobacter pylori).